The primary structure comprises 186 residues: ATP synthase subunit delta (186 aa).

It belongs to the ATPase delta chain family. F-type ATPases have 2 components, F(1) - the catalytic core - and F(0) - the membrane proton channel. F(1) has five subunits: alpha(3), beta(3), gamma(1), delta(1), epsilon(1). F(0) has three main subunits: a(1), b(2) and c(10-14). The alpha and beta chains form an alternating ring which encloses part of the gamma chain. F(1) is attached to F(0) by a central stalk formed by the gamma and epsilon chains, while a peripheral stalk is formed by the delta and b chains.

The protein resides in the cell inner membrane. Functionally, f(1)F(0) ATP synthase produces ATP from ADP in the presence of a proton or sodium gradient. F-type ATPases consist of two structural domains, F(1) containing the extramembraneous catalytic core and F(0) containing the membrane proton channel, linked together by a central stalk and a peripheral stalk. During catalysis, ATP synthesis in the catalytic domain of F(1) is coupled via a rotary mechanism of the central stalk subunits to proton translocation. Its function is as follows. This protein is part of the stalk that links CF(0) to CF(1). It either transmits conformational changes from CF(0) to CF(1) or is implicated in proton conduction. In Bacteroides fragilis (strain ATCC 25285 / DSM 2151 / CCUG 4856 / JCM 11019 / LMG 10263 / NCTC 9343 / Onslow / VPI 2553 / EN-2), this protein is ATP synthase subunit delta.